The following is a 289-amino-acid chain: Trimeric intracellular cation channel type B (289 aa).

The Lumenal segment spans residues Met1 to Lys18. A helical transmembrane segment spans residues Leu19–Ser36. Topologically, residues Leu37–Arg49 are cytoplasmic. A helical transmembrane segment spans residues Ser50–Leu73. Topologically, residues Ala74–Thr85 are lumenal. The chain crosses the membrane as a helical span at residues Asn86–Asp103. Over Val104–Ser107 the chain is Cytoplasmic. Residues Leu108–Thr125 form a helical membrane-spanning segment. A 1,2-diacyl-sn-glycero-3-phospho-(1D-myo-inositol-4,5-bisphosphate) contacts are provided by Lys122 and Arg126. The Lumenal segment spans residues Arg126–Ala144. A helical transmembrane segment spans residues Leu145–Ile162. Over Ser163 to Met183 the chain is Cytoplasmic. Residues Ser184–Gln201 form a helical membrane-spanning segment. The Lumenal segment spans residues Cys202–His210. A helical transmembrane segment spans residues His211–Leu230. At Gly231–Asn289 the chain is on the cytoplasmic side. The interval His260–Asn289 is disordered. Basic and acidic residues predominate over residues His278–Asn289.

Belongs to the TMEM38 family. In terms of assembly, homotrimer; conformation seems to be controled by binding to diacylglycerol (DAG).

Its subcellular location is the endoplasmic reticulum membrane. It carries out the reaction K(+)(in) = K(+)(out). With respect to regulation, channel activity is activated by increased cytosolic Ca(2+) levels and blocked by luminal high Ca(2+) levels. Its function is as follows. Intracellular monovalent cation channel required for maintenance of rapid intracellular calcium release. Acts as a potassium counter-ion channel that functions in synchronization with calcium release from intracellular stores. Activated by increased cytosolic Ca(2+) levels. This Danio rerio (Zebrafish) protein is Trimeric intracellular cation channel type B (tmem38b).